The sequence spans 138 residues: MLQPARRKYRKEQKGRNTGIATRGSSVAFGDFGLKCIDRGRLTARQIEAARRAISRHVKRGGRIWIRVFPDKPISQKPAEVRMGNGKGNPEYYVAEIQPGKIVFEIVGVPEELAREAFRLAAAKLPLRTTFVARMIGQ.

The span at M1 to Q13 shows a compositional bias: basic residues. Residues M1–A21 are disordered.

This sequence belongs to the universal ribosomal protein uL16 family. Part of the 50S ribosomal subunit.

Functionally, binds 23S rRNA and is also seen to make contacts with the A and possibly P site tRNAs. This chain is Large ribosomal subunit protein uL16, found in Albidiferax ferrireducens (strain ATCC BAA-621 / DSM 15236 / T118) (Rhodoferax ferrireducens).